The sequence spans 757 residues: Polyribonucleotide nucleotidyltransferase (757 aa).

Positions 482 and 488 each coordinate Mg(2+). A KH domain is found at 549–608 (PRMLSFYIDKDKISAAIGSKGKNIRSVCERSNAKIEIGDDGKVSVFATSGTEAEIAKSMM). One can recognise an S1 motif domain in the interval 618–686 (GSIVDVKVVR…KGGCPKLSRR (69 aa)). Basic and acidic residues predominate over residues 703–714 (EERKDGPNDRDN). A disordered region spans residues 703–757 (EERKDGPNDRDNYYNNSFSRKPGGSHHKRPPRPRSGFSNRNRPKFGNNDSSSGFY). Positions 725–734 (GGSHHKRPPR) are enriched in basic residues.

The protein belongs to the polyribonucleotide nucleotidyltransferase family. Mg(2+) is required as a cofactor.

Its subcellular location is the cytoplasm. The enzyme catalyses RNA(n+1) + phosphate = RNA(n) + a ribonucleoside 5'-diphosphate. Involved in mRNA degradation. Catalyzes the phosphorolysis of single-stranded polyribonucleotides processively in the 3'- to 5'-direction. The polypeptide is Polyribonucleotide nucleotidyltransferase (Wolbachia sp. subsp. Drosophila simulans (strain wRi)).